Consider the following 309-residue polypeptide: Phytoene synthase (309 aa).

This sequence belongs to the phytoene/squalene synthase family. ATP serves as cofactor. The cofactor is Mn(2+). Requires Mg(2+) as cofactor.

The protein operates within carotenoid biosynthesis; phytoene biosynthesis. Involved in the biosynthesis of carotenoids. Catalyzes the condensation of two molecules of geranylgeranyl diphosphate (GGPP) to give prephytoene diphosphate (PPPP) and the subsequent rearrangement of the cyclopropylcarbinyl intermediate to yield phytoene. The polypeptide is Phytoene synthase (crtB) (Pseudescherichia vulneris (Escherichia vulneris)).